We begin with the raw amino-acid sequence, 704 residues long: Phosphate acetyltransferase (704 aa).

A phosphate acetyltransferase region spans residues 380–704 (FNLIEKAKRN…IQAQAEKGLI (325 aa)).

The protein in the N-terminal section; belongs to the CobB/CobQ family. It in the C-terminal section; belongs to the phosphate acetyltransferase and butyryltransferase family. As to quaternary structure, homohexamer.

The protein resides in the cytoplasm. It catalyses the reaction acetyl-CoA + phosphate = acetyl phosphate + CoA. It functions in the pathway metabolic intermediate biosynthesis; acetyl-CoA biosynthesis; acetyl-CoA from acetate: step 2/2. Functionally, involved in acetate metabolism. The sequence is that of Phosphate acetyltransferase (pta) from Nitratidesulfovibrio vulgaris (strain ATCC 29579 / DSM 644 / CCUG 34227 / NCIMB 8303 / VKM B-1760 / Hildenborough) (Desulfovibrio vulgaris).